We begin with the raw amino-acid sequence, 303 residues long: Taste receptor type 2 member 13 (303 aa).

At 1–7 the chain is on the extracellular side; sequence MESALPS. The helical transmembrane segment at 8 to 28 threads the bilayer; it reads IFTLVIIAEFIIGNLSNGFIV. The Cytoplasmic portion of the chain corresponds to 29 to 55; that stretch reads LINCIDWVSKRELSSVDKLLIILAISR. Residues 56 to 76 form a helical membrane-spanning segment; sequence IGLIWEILVSWFLALHSLAIF. Residues 77–85 lie on the Extracellular side of the membrane; it reads VSGTGLRIM. The helical transmembrane segment at 86-106 threads the bilayer; sequence IFSWIVSNHFNLWLATILSIF. Residues 107–128 lie on the Cytoplasmic side of the membrane; the sequence is YLLKIASFSSPAFLYLKRRVNK. A helical membrane pass occupies residues 129–149; the sequence is VILMILLGTLVFLFLNLIQIN. Residues 150–184 lie on the Extracellular side of the membrane; the sequence is MLIKDWLDRYERNTTWNFSMSDFETFSVSVRFTMT. N-linked (GlcNAc...) asparagine glycosylation is found at asparagine 162 and asparagine 166. The helical transmembrane segment at 185 to 205 threads the bilayer; sequence MFSLTPFTVAFISFLLLVFSL. Over 206–232 the chain is Cytoplasmic; that stretch reads QKHLQKMQLNYKGHRDPRTKVHTNALK. A helical membrane pass occupies residues 233-253; that stretch reads IVISFLLFYASFFLSILISWI. At 254–261 the chain is on the extracellular side; that stretch reads SELYQNTV. The chain crosses the membrane as a helical span at residues 262 to 282; sequence IYMLCETIGAFYPSSHSFLLI. The Cytoplasmic segment spans residues 283 to 303; it reads LGNAKLRQAFLLVAAKVWAKR.

Belongs to the G-protein coupled receptor T2R family.

It is found in the membrane. Functionally, receptor that may play a role in the perception of bitterness and is gustducin-linked. May play a role in sensing the chemical composition of the gastrointestinal content. The activity of this receptor may stimulate alpha gustducin, mediate PLC-beta-2 activation and lead to the gating of TRPM5. The chain is Taste receptor type 2 member 13 (TAS2R13) from Pan paniscus (Pygmy chimpanzee).